Here is a 342-residue protein sequence, read N- to C-terminus: L-threonine 3-dehydrogenase (342 aa).

Zn(2+) is bound at residue cysteine 38. Active-site charge relay system residues include threonine 40 and histidine 43. Residues histidine 63, glutamate 64, cysteine 93, cysteine 96, cysteine 99, and cysteine 107 each coordinate Zn(2+). NAD(+) contacts are provided by residues valine 175, aspartate 195, arginine 200, 262–264, and 286–287; these read LGI and IY.

The protein belongs to the zinc-containing alcohol dehydrogenase family. As to quaternary structure, homotetramer. Zn(2+) serves as cofactor.

The protein localises to the cytoplasm. It carries out the reaction L-threonine + NAD(+) = (2S)-2-amino-3-oxobutanoate + NADH + H(+). Its pathway is amino-acid degradation; L-threonine degradation via oxydo-reductase pathway; glycine from L-threonine: step 1/2. Catalyzes the NAD(+)-dependent oxidation of L-threonine to 2-amino-3-ketobutyrate. This is L-threonine 3-dehydrogenase from Coxiella burnetii (strain Dugway 5J108-111).